The chain runs to 353 residues: MATPVYIVLPSRPDHVVSTAKDHAVQGYTELHPYDPSQTEGRLWIFDNDGYIRLAANHNLVLDVNGGAAKEGNTVLSYPDKKDHAKNQLWVNKDCILHTKLDESFHLGVNDKGQVIITQKKEQRVILRAPASLEKRPSAWERHEGELNVVAVGAGNHDVWGVNHLEHIYHWDGSKWHQIEGAATNISVGLDGTVWCVNKAHEIYRLDRGTNKWSIVPGELVQVSVGNSHNIWGVNHLDAIYKWNADSNSWTFVDGQLTNVSVGHDGTVYGVNRAGNIYHYNGNSWDAVSGELVQIHVANKDLIVGVNKAGHVYRLKHGKDWEKLEGELSWVAVGHGGELWGANSAHNIYKALL.

The Ricin B-type lectin domain occupies Trp-44 to Lys-93. 6 tandem repeats follow at residues Ser-138–Gly-173, Ser-174–Thr-210, Asn-211–Ser-247, Asn-248–Gly-282, Asn-283–Gly-318, and Lys-319–Leu-353. Residues Ser-138 to Leu-353 form a 6 X approximate tandem repeats region.

Belongs to the tectonin family.

It is found in the cell surface. The protein resides in the cytoplasmic vesicle membrane. In terms of biological role, probably involved in bacterial recognition. May be a lectin that function as part of a transmembrane signaling complex during phagocytosis. In Physarum polycephalum (Slime mold), this protein is Tectonin-2 (TECB).